We begin with the raw amino-acid sequence, 316 residues long: Rhomboid-related protein 4 (316 aa).

At 1 to 21 (MQRRTRGIDTGLLLLLSQVFH) the chain is on the cytoplasmic side. Residues 22-42 (IGINNIPPVTLATLAVNVWFF) traverse the membrane as a helical segment. At 43–103 (LNPWKPLYHS…KLEKRLGSRW (61 aa)) the chain is on the extracellular side. The chain crosses the membrane as a helical span at residues 104–124 (FAYIIATFSLLTGVVYLLLQF). The Cytoplasmic segment spans residues 125–137 (ASAELMNQPDFKR). Residues 138-154 (NCAVGFSGVLFALKVLS) traverse the membrane as a helical segment. Ser144 serves as the catalytic Nucleophile. Topologically, residues 155 to 182 (NHYCPGGFVNILGFPVPNRFACWAELAA) are extracellular. A helical membrane pass occupies residues 183–203 (IHFCTPGTSFAGHLAGILVGL). His195 is an active-site residue. The Cytoplasmic segment spans residues 204–316 (MYTQGPLKKI…RQRLHRFDGQ (113 aa)). The segment at 269-284 (SEEEQLERALRASIWD) is ubiquitin-binding domain (UBD). The segment at 301 to 316 (PEEEMRRQRLHRFDGQ) is VCP/p97-interacting motif (VIM).

Belongs to the peptidase S54 family. In terms of assembly, interacts with BIK and STEAP3. Interacts (via C-terminal domain) with VCP. Interacts with ubiquitin and ubiquitinated proteins. As to expression, expressed in intestine, lung, brain, kidney, epididymis and testis.

It is found in the endoplasmic reticulum membrane. The protein localises to the mitochondrion membrane. The catalysed reaction is Cleaves type-1 transmembrane domains using a catalytic dyad composed of serine and histidine that are contributed by different transmembrane domains.. With respect to regulation, inhibited by aprotinin. Its function is as follows. Intramembrane-cleaving serine protease that cleaves single transmembrane or multi-pass membrane proteins in the hydrophobic plane of the membrane, luminal loops and juxtamembrane regions. Involved in regulated intramembrane proteolysis and the subsequent release of functional polypeptides from their membrane anchors. Functional component of endoplasmic reticulum-associated degradation (ERAD) for misfolded membrane proteins. Required for the degradation process of some specific misfolded endoplasmic reticulum (ER) luminal proteins. Participates in the transfer of misfolded proteins from the ER to the cytosol, where they are destroyed by the proteasome in a ubiquitin-dependent manner. Functions in BIK, MPZ, PKD1, PTCRA, RHO, STEAP3 and TRAC processing. Involved in the regulation of exosomal secretion; inhibits the TSAP6-mediated secretion pathway. Involved in the regulation of apoptosis; modulates BIK-mediated apoptotic activity. Also plays a role in the regulation of spermatogenesis; inhibits apoptotic activity in spermatogonia. The chain is Rhomboid-related protein 4 (Rhbdd1) from Rattus norvegicus (Rat).